The chain runs to 364 residues: tRNA 2-selenouridine synthase (364 aa).

The 124-residue stretch at 14–137 (LLADTPLIDV…LRQTAIQATW (124 aa)) folds into the Rhodanese domain. Cysteine 97 serves as the catalytic S-selanylcysteine intermediate.

Belongs to the SelU family. Monomer.

The catalysed reaction is 5-methylaminomethyl-2-thiouridine(34) in tRNA + selenophosphate + (2E)-geranyl diphosphate + H2O + H(+) = 5-methylaminomethyl-2-selenouridine(34) in tRNA + (2E)-thiogeraniol + phosphate + diphosphate. The enzyme catalyses 5-methylaminomethyl-2-thiouridine(34) in tRNA + (2E)-geranyl diphosphate = 5-methylaminomethyl-S-(2E)-geranyl-thiouridine(34) in tRNA + diphosphate. It catalyses the reaction 5-methylaminomethyl-S-(2E)-geranyl-thiouridine(34) in tRNA + selenophosphate + H(+) = 5-methylaminomethyl-2-(Se-phospho)selenouridine(34) in tRNA + (2E)-thiogeraniol. It carries out the reaction 5-methylaminomethyl-2-(Se-phospho)selenouridine(34) in tRNA + H2O = 5-methylaminomethyl-2-selenouridine(34) in tRNA + phosphate. Functionally, involved in the post-transcriptional modification of the uridine at the wobble position (U34) of tRNA(Lys), tRNA(Glu) and tRNA(Gln). Catalyzes the conversion of 2-thiouridine (S2U-RNA) to 2-selenouridine (Se2U-RNA). Acts in a two-step process involving geranylation of 2-thiouridine (S2U) to S-geranyl-2-thiouridine (geS2U) and subsequent selenation of the latter derivative to 2-selenouridine (Se2U) in the tRNA chain. The polypeptide is tRNA 2-selenouridine synthase (Salmonella heidelberg (strain SL476)).